The chain runs to 534 residues: EH domain-containing protein 1 (534 aa).

Met1 carries the N-acetylmethionine modification. A Dynamin-type G domain is found at 55–286 (FDNKPMVLLV…DLFKDIQSLP (232 aa)). Residues 65 to 72 (GQYSTGKT) form a G1 motif region. Position 65 to 72 (65 to 72 (GQYSTGKT)) interacts with ATP. The G2 motif stretch occupies residues 91–92 (EP). Residues 153 to 156 (DTPG) form a G3 motif region. Residues 198–227 (DEFSEVIKALKNHEDKIRVVLNKADQIETQ) adopt a coiled-coil conformation. Residues 219 to 222 (NKAD) are G4 motif. Lys220 lines the ATP pocket. Residue Ile243 is a region of interest, G5 motif. Trp258 provides a ligand contact to ATP. Residues 444–532 (DKPTYDEIFY…PHLVPPSKRR (89 aa)) enclose the EH domain. Ser456 is modified (phosphoserine). Residues 476–511 (LPNTVLGKIWKLADVDRDGLLDDEEFALANHLIKVK) form the EF-hand domain. Ca(2+)-binding residues include Asp489, Asp491, Asp493, and Glu500.

Belongs to the TRAFAC class dynamin-like GTPase superfamily. Dynamin/Fzo/YdjA family. EHD subfamily. In terms of assembly, homooligomer, and heterooligomer with EHD2, EHD3 and EHD4, ATP-binding is required for heterooligomerization. Interacts (via EH domain) with MICALL1 (via NPF1 motif); the interaction is direct and recruits EHD1 to membranes. Interacts with RAB35; the interaction is indirect through MICALL1 and recruits EHD1 to membranes. Interacts (via EH domain) with PACSIN2 (via NPF motifs); regulates localization to tubular recycling endosome membranes. Interacts with PACSIN1. Interacts with RAB8A. Interacts with FER1L5 (via second C2 domain). Interacts with MYOF. Interacts with ZFYVE20. Interacts (via EH domain) with RAB11FIP2.

It localises to the recycling endosome membrane. Its subcellular location is the early endosome membrane. The protein resides in the cell membrane. It is found in the cell projection. The protein localises to the cilium membrane. In terms of biological role, ATP- and membrane-binding protein that controls membrane reorganization/tubulation upon ATP hydrolysis. Acts in early endocytic membrane fusion and membrane trafficking of recycling endosomes. Recruited to endosomal membranes upon nerve growth factor stimulation, indirectly regulates neurite outgrowth. Plays a role in myoblast fusion. Involved in the unidirectional retrograde dendritic transport of endocytosed BACE1 and in efficient sorting of BACE1 to axons implicating a function in neuronal APP processing. Plays a role in the formation of the ciliary vesicle (CV), an early step in cilium biogenesis. Proposed to be required for the fusion of distal appendage vesicles (DAVs) to form the CV by recruiting SNARE complex component SNAP29. Is required for recruitment of transition zone proteins CEP290, RPGRIP1L, TMEM67 and B9D2, and of IFT20 following DAV reorganization before Rab8-dependent ciliary membrane extension. Required for the loss of CCP110 form the mother centriole essential for the maturation of the basal body during ciliogenesis. This chain is EH domain-containing protein 1, found in Bos taurus (Bovine).